The following is a 269-amino-acid chain: Auxin-responsive protein IAA26 (269 aa).

A compositionally biased stretch (basic and acidic residues) spans 25–40; it reads YQEDKNNTDQEKKLEL. 2 disordered regions span residues 25-55 and 76-146; these read YQEDKNNTDQEKKLELRLGPPGGDEEDHSAI and CFNG…KQVE. The short motif at 38 to 42 is the EAR-like (transcriptional repression) element; that stretch reads LELRL. Composition is skewed to polar residues over residues 80-93 and 117-136; these read NHFSPSNKTTSVPH and LASTSSSKLGNESSHGGQIN. Residues 137–146 show a composition bias toward basic and acidic residues; it reads KSDDGEKQVE. The PB1 domain maps to 151–250; sequence GMFVKINMDG…SVKRLRVIKS (100 aa).

The protein belongs to the Aux/IAA family. As to quaternary structure, homodimers and heterodimers. Interacts with phytochrome A. Interacts with TPL.

It localises to the nucleus. Aux/IAA proteins are short-lived transcriptional factors that function as repressors of early auxin response genes at low auxin concentrations. Repression is thought to result from the interaction with auxin response factors (ARFs), proteins that bind to the auxin-responsive promoter element (AuxRE). Formation of heterodimers with ARF proteins may alter their ability to modulate early auxin response genes expression. The polypeptide is Auxin-responsive protein IAA26 (IAA26) (Arabidopsis thaliana (Mouse-ear cress)).